Reading from the N-terminus, the 212-residue chain is Large ribosomal subunit protein uL3 (212 aa).

Positions Arg133–Lys152 are disordered.

Belongs to the universal ribosomal protein uL3 family. In terms of assembly, part of the 50S ribosomal subunit. Forms a cluster with proteins L14 and L19.

One of the primary rRNA binding proteins, it binds directly near the 3'-end of the 23S rRNA, where it nucleates assembly of the 50S subunit. This chain is Large ribosomal subunit protein uL3, found in Syntrophomonas wolfei subsp. wolfei (strain DSM 2245B / Goettingen).